Reading from the N-terminus, the 417-residue chain is NADH-quinone oxidoreductase subunit D (417 aa).

The protein belongs to the complex I 49 kDa subunit family. As to quaternary structure, NDH-1 is composed of 14 different subunits. Subunits NuoB, C, D, E, F, and G constitute the peripheral sector of the complex.

The protein resides in the cell inner membrane. It catalyses the reaction a quinone + NADH + 5 H(+)(in) = a quinol + NAD(+) + 4 H(+)(out). In terms of biological role, NDH-1 shuttles electrons from NADH, via FMN and iron-sulfur (Fe-S) centers, to quinones in the respiratory chain. The immediate electron acceptor for the enzyme in this species is believed to be ubiquinone. Couples the redox reaction to proton translocation (for every two electrons transferred, four hydrogen ions are translocated across the cytoplasmic membrane), and thus conserves the redox energy in a proton gradient. The protein is NADH-quinone oxidoreductase subunit D of Ralstonia pickettii (strain 12J).